The following is a 125-amino-acid chain: Ribonuclease VapC19 (125 aa).

Residues 3 to 122 form the PINc domain; it reads LIDTTIAVDH…RHFPMFPDLQ (120 aa). Positions 5 and 93 each coordinate Mg(2+).

It belongs to the PINc/VapC protein family. Mg(2+) is required as a cofactor.

Toxic component of a type II toxin-antitoxin (TA) system. An RNase. Its toxic effect is neutralized by coexpression with cognate antitoxin VapB19. This Mycobacterium tuberculosis (strain CDC 1551 / Oshkosh) protein is Ribonuclease VapC19.